The primary structure comprises 118 residues: MNKIDAIEMEQMKKNIPGFRPGDTVKVQVKIVEGDKSRIQAFQGVVIGRQNGGIRESFTVRKISNGVGVERSFPLHSPSIDAIEVITRGQVRRAKLYYLRKLRGKASRIKEKKYVAGM.

It belongs to the bacterial ribosomal protein bL19 family.

This protein is located at the 30S-50S ribosomal subunit interface and may play a role in the structure and function of the aminoacyl-tRNA binding site. The polypeptide is Large ribosomal subunit protein bL19 (Geotalea daltonii (strain DSM 22248 / JCM 15807 / FRC-32) (Geobacter daltonii)).